Reading from the N-terminus, the 509-residue chain is Maturase K (509 aa).

Belongs to the intron maturase 2 family. MatK subfamily.

Its subcellular location is the plastid. It is found in the chloroplast. In terms of biological role, usually encoded in the trnK tRNA gene intron. Probably assists in splicing its own and other chloroplast group II introns. In Nicotiana alata (Winged tobacco), this protein is Maturase K.